The sequence spans 258 residues: Imidazole glycerol phosphate synthase subunit HisF (258 aa).

Catalysis depends on residues aspartate 11 and aspartate 130.

This sequence belongs to the HisA/HisF family. Heterodimer of HisH and HisF.

The protein localises to the cytoplasm. The enzyme catalyses 5-[(5-phospho-1-deoxy-D-ribulos-1-ylimino)methylamino]-1-(5-phospho-beta-D-ribosyl)imidazole-4-carboxamide + L-glutamine = D-erythro-1-(imidazol-4-yl)glycerol 3-phosphate + 5-amino-1-(5-phospho-beta-D-ribosyl)imidazole-4-carboxamide + L-glutamate + H(+). It functions in the pathway amino-acid biosynthesis; L-histidine biosynthesis; L-histidine from 5-phospho-alpha-D-ribose 1-diphosphate: step 5/9. Functionally, IGPS catalyzes the conversion of PRFAR and glutamine to IGP, AICAR and glutamate. The HisF subunit catalyzes the cyclization activity that produces IGP and AICAR from PRFAR using the ammonia provided by the HisH subunit. This Shigella dysenteriae serotype 1 (strain Sd197) protein is Imidazole glycerol phosphate synthase subunit HisF.